The sequence spans 493 residues: Malonyl-CoA decarboxylase, mitochondrial (493 aa).

The N-terminal 39 residues, 1–39 (MRGFGPGLTARRLLPLRLPPRPPGPRLASGQAAGALERA), are a transit peptide targeting the mitochondrion. The tract at residues 40-190 (MDELLRRAVP…VLKGMLSEWF (151 aa)) is alpha-helical domain. Lys-59 bears the N6-acetyllysine mark. Lys-168 bears the N6-acetyllysine; alternate mark. The residue at position 168 (Lys-168) is an N6-succinyllysine; alternate. A catalytic domain region spans residues 191 to 493 (SSGFLNLERV…VAQFQKNSKL (303 aa)). Residue Lys-211 is modified to N6-acetyllysine. N6-succinyllysine is present on Lys-222. Malonyl-CoA contacts are provided by residues 299–305 (QGVELGT) and Ser-329. The active-site Proton acceptor is the Ser-329. Residue Lys-389 is modified to N6-acetyllysine. Malonyl-CoA is bound at residue His-423. His-423 (proton donor) is an active-site residue. The residue at position 472 (Lys-472) is an N6-acetyllysine. A Microbody targeting signal motif is present at residues 491-493 (SKL).

Homotetramer. Dimer of dimers. The two subunits within a dimer display conformational differences suggesting that at any given moment, only one of the two subunits is competent for malonyl-CoA binding and catalytic activity. Under oxidizing conditions, can form disulfide-linked homotetramers (in vitro). Associates with the peroxisomal targeting signal receptor PEX5. Post-translationally, acetylation at Lys-472 activates malonyl-CoA decarboxylase activity. Deacetylation at Lys-472 by SIRT4 represses activity, leading to promote lipogenesis. Interchain disulfide bonds may form in peroxisomes (Potential). Interchain disulfide bonds are not expected to form in the reducing environment of the cytoplasm and mitochondria. As to expression, expressed in fibroblasts and hepatoblastoma cells (at protein level). Expressed strongly in heart, liver, skeletal muscle, kidney and pancreas. Expressed in myotubes. Expressed weakly in brain, placenta, spleen, thymus, testis, ovary and small intestine.

The protein resides in the cytoplasm. Its subcellular location is the mitochondrion matrix. It is found in the peroxisome. It localises to the peroxisome matrix. The catalysed reaction is malonyl-CoA + H(+) = acetyl-CoA + CO2. It participates in metabolic intermediate biosynthesis; acetyl-CoA biosynthesis; acetyl-CoA from malonyl-CoA: step 1/1. With respect to regulation, malonyl-CoA decarboxylase activity does not require any cofactors or divalent metal ions. Formation of interchain disulfide bonds leads to positive cooperativity between active sites and increases the affinity for malonyl-CoA and the catalytic efficiency (in vitro). Functionally, catalyzes the conversion of malonyl-CoA to acetyl-CoA. In the fatty acid biosynthesis MCD selectively removes malonyl-CoA and thus assures that methyl-malonyl-CoA is the only chain elongating substrate for fatty acid synthase and that fatty acids with multiple methyl side chains are produced. In peroxisomes it may be involved in degrading intraperoxisomal malonyl-CoA, which is generated by the peroxisomal beta-oxidation of odd chain-length dicarboxylic fatty acids. Plays a role in the metabolic balance between glucose and lipid oxidation in muscle independent of alterations in insulin signaling. May play a role in controlling the extent of ischemic injury by promoting glucose oxidation. This chain is Malonyl-CoA decarboxylase, mitochondrial, found in Homo sapiens (Human).